A 167-amino-acid polypeptide reads, in one-letter code: SsrA-binding protein (167 aa).

Residues 139-158 show a composition bias toward basic and acidic residues; sequence QNHDKRDAAKDRDWQRDKQR. The tract at residues 139-167 is disordered; sequence QNHDKRDAAKDRDWQRDKQRVMRRHNRDA.

Belongs to the SmpB family.

The protein localises to the cytoplasm. Its function is as follows. Required for rescue of stalled ribosomes mediated by trans-translation. Binds to transfer-messenger RNA (tmRNA), required for stable association of tmRNA with ribosomes. tmRNA and SmpB together mimic tRNA shape, replacing the anticodon stem-loop with SmpB. tmRNA is encoded by the ssrA gene; the 2 termini fold to resemble tRNA(Ala) and it encodes a 'tag peptide', a short internal open reading frame. During trans-translation Ala-aminoacylated tmRNA acts like a tRNA, entering the A-site of stalled ribosomes, displacing the stalled mRNA. The ribosome then switches to translate the ORF on the tmRNA; the nascent peptide is terminated with the 'tag peptide' encoded by the tmRNA and targeted for degradation. The ribosome is freed to recommence translation, which seems to be the essential function of trans-translation. The polypeptide is SsrA-binding protein (Xanthomonas axonopodis pv. citri (strain 306)).